The sequence spans 359 residues: Ornithine cyclodeaminase (359 aa).

2 residues coordinate L-ornithine: R53 and K77. Residues T92, R120, 147 to 148 (AQ), D169, T209, 232 to 235 (VGGD), K239, and S300 each bind NAD(+). R120 is an L-ornithine binding site. D235 is an L-ornithine binding site. Residue D235 is the Proton donor/acceptor of the active site. V301 contributes to the L-ornithine binding site.

The protein belongs to the ornithine cyclodeaminase/mu-crystallin family. The cofactor is NAD(+).

The catalysed reaction is L-ornithine = L-proline + NH4(+). It participates in amino-acid biosynthesis; L-proline biosynthesis; L-proline from L-ornithine: step 1/1. Functionally, catalyzes the conversion of L-ornithine into L-proline with release of ammonia. The protein is Ornithine cyclodeaminase of Brucella melitensis biotype 1 (strain ATCC 23456 / CCUG 17765 / NCTC 10094 / 16M).